Here is a 261-residue protein sequence, read N- to C-terminus: Ribosome biogenesis protein C3_06160C_A (261 aa).

The segment at 1 to 38 (MPQNEYIEQHIKKHGRRLDYEERKRKKEAREGHRVAKD) is disordered. 2 consecutive short sequence motifs (nuclear localization signal) follow at residues 11 to 18 (IKKHGRRL) and 51 to 58 (AKKRYAEK). Residues 17 to 37 (RLDYEERKRKKEAREGHRVAK) are compositionally biased toward basic and acidic residues. Positions 59–85 (VAMKKKIKAHQESKVKGPSTPKAEDGE) are disordered.

This sequence belongs to the eukaryotic ribosomal protein eS8 family. Ribosome biogenesis protein NSA2 subfamily. As to quaternary structure, component of the pre-66S ribosomal particle. Interacts with NOP7 and RRP1. Interacts with RSA4 (via WD repeats).

It localises to the nucleus. The protein resides in the nucleolus. Its function is as follows. Involved in the biogenesis of the 60S ribosomal subunit. May play a part in the quality control of pre-60S particles. In Candida albicans (strain SC5314 / ATCC MYA-2876) (Yeast), this protein is Ribosome biogenesis protein C3_06160C_A.